The primary structure comprises 139 residues: Phosphoribosyl-AMP cyclohydrolase (139 aa).

Mg(2+) is bound at residue Asp-91. Cys-92 contributes to the Zn(2+) binding site. Residues Asp-93 and Asp-95 each contribute to the Mg(2+) site. Zn(2+) is bound by residues Cys-110 and Cys-117.

Belongs to the PRA-CH family. Homodimer. Requires Mg(2+) as cofactor. Zn(2+) serves as cofactor.

It is found in the cytoplasm. It carries out the reaction 1-(5-phospho-beta-D-ribosyl)-5'-AMP + H2O = 1-(5-phospho-beta-D-ribosyl)-5-[(5-phospho-beta-D-ribosylamino)methylideneamino]imidazole-4-carboxamide. It functions in the pathway amino-acid biosynthesis; L-histidine biosynthesis; L-histidine from 5-phospho-alpha-D-ribose 1-diphosphate: step 3/9. In terms of biological role, catalyzes the hydrolysis of the adenine ring of phosphoribosyl-AMP. This is Phosphoribosyl-AMP cyclohydrolase from Brucella canis (strain ATCC 23365 / NCTC 10854 / RM-666).